The following is a 139-amino-acid chain: Putative pre-16S rRNA nuclease (139 aa).

It belongs to the YqgF nuclease family.

Its subcellular location is the cytoplasm. In terms of biological role, could be a nuclease involved in processing of the 5'-end of pre-16S rRNA. This chain is Putative pre-16S rRNA nuclease, found in Streptococcus gordonii (strain Challis / ATCC 35105 / BCRC 15272 / CH1 / DL1 / V288).